A 345-amino-acid chain; its full sequence is Myb/SANT-like DNA-binding domain-containing protein 4 (345 aa).

One can recognise a Myb-like domain in the interval 4-77; the sequence is LKRKRKSNFS…EVKRRYLDWR (74 aa). Residue K9 forms a Glycyl lysine isopeptide (Lys-Gly) (interchain with G-Cter in SUMO2) linkage. A Phosphoserine modification is found at S106. Glycyl lysine isopeptide (Lys-Gly) (interchain with G-Cter in SUMO2) cross-links involve residues K114 and K142. Positions 141–160 are disordered; that stretch reads VKVEEEERDPQSPEFEIEEE. Residue T188 is modified to Phosphothreonine. A coiled-coil region spans residues 203–345; sequence LLVNIEKQKL…LRIQKEGHLQ (143 aa). Glycyl lysine isopeptide (Lys-Gly) (interchain with G-Cter in SUMO2) cross-links involve residues K237, K254, and K273.

The protein is Myb/SANT-like DNA-binding domain-containing protein 4 (MSANTD4) of Bos taurus (Bovine).